The sequence spans 71 residues: General transcription and DNA repair factor IIH subunit TFB5 (71 aa).

This sequence belongs to the TFB5 family. Component of the 7-subunit TFIIH core complex composed of XPB, XPD, TFB1/GTF2H1, GTF2H2/P44, TFB4/GTF2H3, TFB2/GTF2H4 and TFB5/GTF2H5, which is active in NER. The core complex associates with the 3-subunit CDK-activating kinase (CAK) module composed of CYCH1/cyclin H1, CDKD and MAT1/At4g30820 to form the 10-subunit holoenzyme (holo-TFIIH) active in transcription.

The protein resides in the nucleus. In terms of biological role, component of the general transcription and DNA repair factor IIH (TFIIH) core complex, which is involved in general and transcription-coupled nucleotide excision repair (NER) of damaged DNA and, when complexed to CAK, in RNA transcription by RNA polymerase II. In NER, TFIIH acts by opening DNA around the lesion to allow the excision of the damaged oligonucleotide and its replacement by a new DNA fragment. In transcription, TFIIH has an essential role in transcription initiation. When the pre-initiation complex (PIC) has been established, TFIIH is required for promoter opening and promoter escape. Phosphorylation of the C-terminal tail (CTD) of the largest subunit of RNA polymerase II by the kinase module CAK controls the initiation of transcription. This Arabidopsis thaliana (Mouse-ear cress) protein is General transcription and DNA repair factor IIH subunit TFB5.